A 347-amino-acid chain; its full sequence is Nicotinate-nucleotide--dimethylbenzimidazole phosphoribosyltransferase (347 aa).

The active-site Proton acceptor is glutamate 316.

It belongs to the CobT family.

It catalyses the reaction 5,6-dimethylbenzimidazole + nicotinate beta-D-ribonucleotide = alpha-ribazole 5'-phosphate + nicotinate + H(+). Its pathway is nucleoside biosynthesis; alpha-ribazole biosynthesis; alpha-ribazole from 5,6-dimethylbenzimidazole: step 1/2. In terms of biological role, catalyzes the synthesis of alpha-ribazole-5'-phosphate from nicotinate mononucleotide (NAMN) and 5,6-dimethylbenzimidazole (DMB). The polypeptide is Nicotinate-nucleotide--dimethylbenzimidazole phosphoribosyltransferase (Vibrio campbellii (strain ATCC BAA-1116)).